Consider the following 935-residue polypeptide: Protein translocase subunit SecA (935 aa).

ATP-binding positions include glutamine 90, 108 to 112 (GEGKT), and aspartate 504. Residues 543-568 (GGRRPQGFGTSKKKGKNWSPSDADIF) form a disordered region.

This sequence belongs to the SecA family. Monomer and homodimer. Part of the essential Sec protein translocation apparatus which comprises SecA, SecYEG and auxiliary proteins SecDF. Other proteins may also be involved.

It is found in the cell inner membrane. Its subcellular location is the cellular thylakoid membrane. The protein resides in the cytoplasm. The enzyme catalyses ATP + H2O + cellular proteinSide 1 = ADP + phosphate + cellular proteinSide 2.. Part of the Sec protein translocase complex. Interacts with the SecYEG preprotein conducting channel. Has a central role in coupling the hydrolysis of ATP to the transfer of proteins into and across the cell membrane, serving as an ATP-driven molecular motor driving the stepwise translocation of polypeptide chains across the membrane. Its function is as follows. Probably participates in protein translocation into and across both the cytoplasmic and thylakoid membranes in cyanobacterial cells. The protein is Protein translocase subunit SecA of Rippkaea orientalis (strain PCC 8801 / RF-1) (Cyanothece sp. (strain PCC 8801)).